Here is a 456-residue protein sequence, read N- to C-terminus: Bifunctional protein GlmU (456 aa).

The pyrophosphorylase stretch occupies residues Met-1 to Arg-229. UDP-N-acetyl-alpha-D-glucosamine-binding positions include Leu-11–Gly-14, Lys-25, Gln-76, Gly-81–Thr-82, Tyr-103–Asp-105, Gly-140, Glu-154, Asn-169, and Asn-227. Residue Asp-105 participates in Mg(2+) binding. Asn-227 provides a ligand contact to Mg(2+). The tract at residues Leu-230 to Ser-250 is linker. Residues Gly-251–Lys-456 are N-acetyltransferase. UDP-N-acetyl-alpha-D-glucosamine is bound by residues Arg-333 and Lys-351. His-363 acts as the Proton acceptor in catalysis. Positions 366 and 377 each coordinate UDP-N-acetyl-alpha-D-glucosamine. Acetyl-CoA is bound by residues Ala-380, Asn-386–Tyr-387, Ser-405, Ala-423, and Arg-440.

In the N-terminal section; belongs to the N-acetylglucosamine-1-phosphate uridyltransferase family. This sequence in the C-terminal section; belongs to the transferase hexapeptide repeat family. In terms of assembly, homotrimer. Mg(2+) serves as cofactor.

The protein localises to the cytoplasm. It carries out the reaction alpha-D-glucosamine 1-phosphate + acetyl-CoA = N-acetyl-alpha-D-glucosamine 1-phosphate + CoA + H(+). It catalyses the reaction N-acetyl-alpha-D-glucosamine 1-phosphate + UTP + H(+) = UDP-N-acetyl-alpha-D-glucosamine + diphosphate. Its pathway is nucleotide-sugar biosynthesis; UDP-N-acetyl-alpha-D-glucosamine biosynthesis; N-acetyl-alpha-D-glucosamine 1-phosphate from alpha-D-glucosamine 6-phosphate (route II): step 2/2. It participates in nucleotide-sugar biosynthesis; UDP-N-acetyl-alpha-D-glucosamine biosynthesis; UDP-N-acetyl-alpha-D-glucosamine from N-acetyl-alpha-D-glucosamine 1-phosphate: step 1/1. It functions in the pathway bacterial outer membrane biogenesis; LPS lipid A biosynthesis. Catalyzes the last two sequential reactions in the de novo biosynthetic pathway for UDP-N-acetylglucosamine (UDP-GlcNAc). The C-terminal domain catalyzes the transfer of acetyl group from acetyl coenzyme A to glucosamine-1-phosphate (GlcN-1-P) to produce N-acetylglucosamine-1-phosphate (GlcNAc-1-P), which is converted into UDP-GlcNAc by the transfer of uridine 5-monophosphate (from uridine 5-triphosphate), a reaction catalyzed by the N-terminal domain. The sequence is that of Bifunctional protein GlmU from Salmonella typhi.